The following is a 365-amino-acid chain: Zinc finger TRAF-type-containing protein 1-B (365 aa).

A disordered region spans residues 1–56 (MSEEREAPGPLASSSAGLGAEVGQEEVPGGAGPARLLLLPSDSDGPPKKRLRSEAE). The RING-type; degenerate zinc finger occupies 72–117 (CAVCLDLPKASVYQCTNGHLMCAGCFIHLLADARLKEEQATCPNCR). A TRAF-type zinc finger spans residues 113-186 (CPNCRCEISK…PWQGPYHELT (74 aa)).

This sequence belongs to the ZFTRAF1 family. In terms of assembly, interacts with LGALS3.

The protein localises to the cytoplasm. The sequence is that of Zinc finger TRAF-type-containing protein 1-B from Xenopus laevis (African clawed frog).